The sequence spans 132 residues: Small ribosomal subunit protein uS8 (132 aa).

The protein belongs to the universal ribosomal protein uS8 family. Part of the 30S ribosomal subunit. Contacts proteins S5 and S12.

One of the primary rRNA binding proteins, it binds directly to 16S rRNA central domain where it helps coordinate assembly of the platform of the 30S subunit. The protein is Small ribosomal subunit protein uS8 of Anoxybacillus flavithermus (strain DSM 21510 / WK1).